The primary structure comprises 535 residues: WD repeat-containing protein 25 (535 aa).

2 disordered regions span residues 1-108 (MASL…PRPS) and 141-160 (DQST…RKRG). A compositionally biased stretch (polar residues) spans 141 to 155 (DQSTFESTAGNASSS). WD repeat units follow at residues 235–277 (GHRG…HCLQ), 281–320 (VHSE…QVFS), 321–362 (GQSD…VVKG), 365–411 (ATIQ…KISN), 415–454 (HERY…RMSR), 460–501 (GHKV…RACT), and 504–535 (GHTQ…KIWH).

This Mus musculus (Mouse) protein is WD repeat-containing protein 25 (Wdr25).